The chain runs to 466 residues: Neuronal acetylcholine receptor subunit non-alpha-3 (466 aa).

An N-terminal signal peptide occupies residues 1–28 (MKLQISGLLLVTAVAYATIEAPEEFVSL). Residues 29–235 (AEMEDTLLRN…VTYSFILKRL (207 aa)) are Extracellular-facing. N-linked (GlcNAc...) asparagine glycosylation is found at asparagine 54, asparagine 141, asparagine 169, and asparagine 208. Cysteine 156 and cysteine 170 are disulfide-bonded. A run of 3 helical transmembrane segments spans residues 236 to 260 (PLFY…VFYL), 268 to 285 (LLLS…LLVI), and 302 to 323 (YLLF…VINV). Residues 324–438 (HHRSSATYHP…WKFVAQVLDR (115 aa)) are Cytoplasmic-facing. A helical transmembrane segment spans residues 439–456 (IFLWVFLTASVLGTILIF).

It belongs to the ligand-gated ion channel (TC 1.A.9) family. Acetylcholine receptor (TC 1.A.9.1) subfamily. In terms of assembly, neuronal AChR seems to be composed of two different type of subunits: alpha and non-alpha (beta). Retina, tectum and brain.

It is found in the postsynaptic cell membrane. The protein resides in the cell membrane. Its function is as follows. After binding acetylcholine, the AChR responds by an extensive change in conformation that affects all subunits and leads to opening of an ion-conducting channel across the plasma membrane. This is Neuronal acetylcholine receptor subunit non-alpha-3 from Carassius auratus (Goldfish).